Here is a 242-residue protein sequence, read N- to C-terminus: MLTRKIKLWDINAHITCRLCSGYLIDATTVTECLHTFCRSCLVKYLEENNTCPTCRIVIHQSHPLQYIGHDRTMQDIVYKLVPGLQEAEMRKQREFYHKLGLEVPGDIKGETCSAKQHLDPHRNGETKADDSSNKEAAEEKQEEDGDYHRSDEQVSICLECNSSKLRGLKRKWIRCSAQATVLHLKKFIAKKLNLSSFNELDILCNEEILGKDHTLKFVVVTRWRFKKAPLLLHYRPKMDLL.

The RING-type zinc finger occupies 17-56 (CRLCSGYLIDATTVTECLHTFCRSCLVKYLEENNTCPTCR). Residues 115-149 (AKQHLDPHRNGETKADDSSNKEAAEEKQEEDGDYH) are disordered. The segment covering 117–140 (QHLDPHRNGETKADDSSNKEAAEE) has biased composition (basic and acidic residues). Positions 132–242 (SSNKEAAEEK…LHYRPKMDLL (111 aa)) are interaction with BCORL1.

In terms of assembly, component of a PRC1-like complex that contains PCGF3, RNF2 and RYBP. Interacts with CBX6, CBX7 and CBX8. Interacts with BCORL1.

It localises to the nucleus. It is found in the nucleoplasm. In terms of biological role, component of a Polycomb group (PcG) multiprotein PRC1-like complex, a complex class required to maintain the transcriptionally repressive state of many genes, including Hox genes, throughout development. PcG PRC1 complex acts via chromatin remodeling and modification of histones; it mediates monoubiquitination of histone H2A 'Lys-119', rendering chromatin heritably changed in its expressibility. Within the PRC1-like complex, regulates RNF2 ubiquitin ligase activity. Plays a redundant role with PCGF5 as part of a PRC1-like complex that mediates monoubiquitination of histone H2A 'Lys-119' on the X chromosome and is required for normal silencing of one copy of the X chromosome in XX females. This Bos taurus (Bovine) protein is Polycomb group RING finger protein 3 (PCGF3).